The chain runs to 164 residues: ATP synthase subunit b (164 aa).

A helical membrane pass occupies residues 12–32; that stretch reads FILVTGSVIVLLLLIKAFAWG.

This sequence belongs to the ATPase B chain family. In terms of assembly, F-type ATPases have 2 components, F(1) - the catalytic core - and F(0) - the membrane proton channel. F(1) has five subunits: alpha(3), beta(3), gamma(1), delta(1), epsilon(1). F(0) has three main subunits: a(1), b(2) and c(10-14). The alpha and beta chains form an alternating ring which encloses part of the gamma chain. F(1) is attached to F(0) by a central stalk formed by the gamma and epsilon chains, while a peripheral stalk is formed by the delta and b chains.

It localises to the cell membrane. Functionally, f(1)F(0) ATP synthase produces ATP from ADP in the presence of a proton or sodium gradient. F-type ATPases consist of two structural domains, F(1) containing the extramembraneous catalytic core and F(0) containing the membrane proton channel, linked together by a central stalk and a peripheral stalk. During catalysis, ATP synthesis in the catalytic domain of F(1) is coupled via a rotary mechanism of the central stalk subunits to proton translocation. Component of the F(0) channel, it forms part of the peripheral stalk, linking F(1) to F(0). This chain is ATP synthase subunit b, found in Streptococcus equi subsp. zooepidemicus (strain MGCS10565).